We begin with the raw amino-acid sequence, 122 residues long: Structural protein p14.5 (122 aa).

Disordered stretches follow at residues 1-27 and 73-122; these read MADFNSPIQYLKEDSRDRTSIGSLEYD and EDNN…HKSK. Ala-2 bears the N-acetylalanine; by host mark. A compositionally biased stretch (basic residues) spans 105-122; that stretch reads KPKKKKHLFPKLSSHKSK.

The protein belongs to the asfivirus structural protein p14.5 family. Interacts with the major capsid protein. Interacts with host IRF3; this interaction interferes with the recruitment of IRF3 to TBK1. In terms of processing, acetylated.

The protein resides in the virion. Functionally, structural protein required for transport of intracellular particles from the assembly sites to the plasma membrane. Binds to both ssDNA and dsDNA. Suppressed the activation of the cGAS/STING pathway by interfering with the recruitment of IRF3 to TBK1, which in turn suppresses IRF3 phosphorylation, decreasing interferon production. The polypeptide is Structural protein p14.5 (African swine fever virus (isolate Warthog/Namibia/Wart80/1980) (ASFV)).